Here is a 552-residue protein sequence, read N- to C-terminus: Lysine--tRNA ligase (552 aa).

A 'HIGH' region motif is present at residues 71–79; the sequence is PSGLPHLGT. The 'KMSKS' region signature appears at 319 to 323; it reads KISKS. Position 322 (lysine 322) interacts with ATP.

It belongs to the class-I aminoacyl-tRNA synthetase family.

It localises to the cytoplasm. It catalyses the reaction tRNA(Lys) + L-lysine + ATP = L-lysyl-tRNA(Lys) + AMP + diphosphate. In Caulobacter sp. (strain K31), this protein is Lysine--tRNA ligase.